We begin with the raw amino-acid sequence, 183 residues long: MNFKIYETKIREEFELVLKWMHNEFIKLRTGRATPAILDGILVDYYGSMTPINQLANISVPEPRVLAIKPYDRSSIKDVASAINASNLGVNPQVDVDIIRLTFAAPTEEVRKNLAKKAKQVGEEAKIRVRHIRQEAQDLFKKNSSTVEDDKKFFQTELDNLTKELNKEIEAVVSHKEKDIMTV.

The protein belongs to the RRF family.

The protein resides in the cytoplasm. Functionally, responsible for the release of ribosomes from messenger RNA at the termination of protein biosynthesis. May increase the efficiency of translation by recycling ribosomes from one round of translation to another. This Ureaplasma urealyticum serovar 10 (strain ATCC 33699 / Western) protein is Ribosome-recycling factor.